Consider the following 272-residue polypeptide: Interleukin-2 receptor subunit alpha (272 aa).

An N-terminal signal peptide occupies residues 1-21 (MDPYLLMWGLLTFITVPGCQA). Residues 22–84 (ELCDDDPPKI…SWDNQCQCTS (63 aa)) enclose the Sushi 1 domain. Residues 22–240 (ELCDDDPPKI…ETFIFTTEYQ (219 aa)) lie on the Extracellular side of the membrane. 3 disulfide bridges follow: Cys-24–Cys-67, Cys-49–Cys-80, and Cys-51–Cys-82. N-linked (GlcNAc...) asparagine glycosylation is found at Asn-70 and Asn-89. Positions 87–98 (ARNTTKQVTPQP) are enriched in polar residues. The segment at 87–109 (ARNTTKQVTPQPEEQKERKTTEM) is disordered. Positions 123–186 (GHCREPPPWE…WTQPQLICTG (64 aa)) constitute a Sushi 2 domain. 2 disulfide bridges follow: Cys-125–Cys-168 and Cys-152–Cys-184. The tract at residues 186-213 (GETEPSQFPGEEEPQASPDGLPESETSR) is disordered. Residues 241–259 (VAVAGCVFLLISVLLLSGL) form a helical membrane-spanning segment. The Cytoplasmic segment spans residues 260–272 (TWQRRQRKNRRTI).

Non-covalent dimer of an alpha and a beta subunit. IL2R exists in 3 different forms: a high affinity dimer, an intermediate affinity monomer (beta subunit), and a low affinity monomer (alpha subunit). The high and intermediate affinity forms also associate with a gamma subunit.

The protein localises to the membrane. Its function is as follows. Receptor for interleukin-2. The receptor is involved in the regulation of immune tolerance by controlling regulatory T cells (TREGs) activity. TREGs suppress the activation and expansion of autoreactive T-cells. The sequence is that of Interleukin-2 receptor subunit alpha (IL2RA) from Macaca mulatta (Rhesus macaque).